The following is an 887-amino-acid chain: Alanine--tRNA ligase (887 aa).

Positions 564, 568, 676, and 680 each coordinate Zn(2+).

Belongs to the class-II aminoacyl-tRNA synthetase family. Requires Zn(2+) as cofactor.

Its subcellular location is the cytoplasm. The enzyme catalyses tRNA(Ala) + L-alanine + ATP = L-alanyl-tRNA(Ala) + AMP + diphosphate. Functionally, catalyzes the attachment of alanine to tRNA(Ala) in a two-step reaction: alanine is first activated by ATP to form Ala-AMP and then transferred to the acceptor end of tRNA(Ala). Also edits incorrectly charged Ser-tRNA(Ala) and Gly-tRNA(Ala) via its editing domain. The chain is Alanine--tRNA ligase from Sinorhizobium medicae (strain WSM419) (Ensifer medicae).